Here is a 179-residue protein sequence, read N- to C-terminus: Large ribosomal subunit protein uL5 (179 aa).

It belongs to the universal ribosomal protein uL5 family. Part of the 50S ribosomal subunit; part of the 5S rRNA/L5/L18/L25 subcomplex. Contacts the 5S rRNA and the P site tRNA. Forms a bridge to the 30S subunit in the 70S ribosome.

In terms of biological role, this is one of the proteins that bind and probably mediate the attachment of the 5S RNA into the large ribosomal subunit, where it forms part of the central protuberance. In the 70S ribosome it contacts protein S13 of the 30S subunit (bridge B1b), connecting the 2 subunits; this bridge is implicated in subunit movement. Contacts the P site tRNA; the 5S rRNA and some of its associated proteins might help stabilize positioning of ribosome-bound tRNAs. The sequence is that of Large ribosomal subunit protein uL5 from Rickettsia prowazekii (strain Madrid E).